The following is a 1166-amino-acid chain: MLKFIRGKGQQPTAERQRLQKDLFAYRKTAQHGFPHKPSALAYDPVAKLMAIGTQTGAIKVFGQPGVELYAQHTLVNNSAAELNVQLLEWVYGTGRILSLTAANQLILWEPVGTTLVPIKTLPFDGKLKKVSSLCCSLNKDLLWIGTEGGNIYQLDLKSFTIREPVIYHDVVLEQVPPTYKLNPGAIESIRQLPNSLNKLLIAYNRGLCVLWDMQTSAVERAYIAPGHGQSVGLSVNSTGTEFSWYHADGSYATWSIDNGEPPQNVNYVPYGPDPCKSINRLYKGQRGTNDVIVFSGGMPRSAYGDHNCVSVHVSDGHKVCLDFTSKVIDFFVTYKEGSDDVEVLIVLLEEELCAYDLTDPSILSIKAPYLHSVHASAVTCNYLASQVTQGVYERILRAGDEQDIDYSSIDWPITGGVLTDDSVESDEDEVVKDYEILLTGHEDGSVKFWDCTGVLLKPIYNFKTASIFGNEHEYREDGAADISAEQLDEGEPPFRKAGLFDPYSDDPRLAVKKIAFCPKTGQLVVGGTAGQIVIADFDTAAEDQSSLKYNSMNLVSDRDGFVWKGHDQLNVRANLLEDNAVPLTENGVNITGVLQVLPPASITCMALEANWGLVSGGTAHGLVLFDFKNFVPVFHRCTLNPNDLTGAGEQLSRRKSFKKSLRESFRKLRKGRSTRNNPTNQVPTTLEARPVERQIEARCTDDGLGSMVRCLLFAKTYVTNVNITSPTLWSATNASTVSVFLLHLPPAQTAATTVPPASGNVPPQASRRISAQLAKEIQLKHRAPVVGISIFDQTGSPVDQFNAGENGSPPHRLLIASEEQFKVFSLPQLKPINKYKLTANEGARIRRIHFGSFSCRISPELLQSLHSGSPTKSVRSHGEGDGAGNVSATSAAGRGDLYHEMALICLTNMGDIMVLSVPELKRQLNAAAVRREDINGISSLCFTNDGEALYMMSSSELQRIALSTSKVVQPTGIVEVEPLESEDNETASLVNDGNESDKDGEANKELANTASDTQPPVATLRAKPLELNADRSSLHLTNGISNSNSPNRANETITSSIGDITVDSVRDHLNTTTTTLCSTTTEETVGRLSVLSTQTNQATTTVNMKDIPDINIPNLMDLASKSNTTETSTSSVVIKSVITSISHEKTNGESENVTTKTTAHEESQF.

14 WD repeats span residues 39–72 (SALAYDPVAKLMAIGTQTGAIKVFGQPGVELYAQ), 82–128 (ELNV…DGKL), 131–167 (VSSLCCSLNKDLLWIGTEGGNIYQLDLKSFTIREPVI), 189–223 (SIRQLPNSLNKLLIAYNRGLCVLWDMQTSAVERAY), 231–263 (SVGLSVNSTGTEFSWYHADGSYATWSIDNGEPP), 278–320 (SINR…GHKV), 328–358 (VIDFFVTYKEGSDDVEVLIVLLEEELCAYDL), 380–464 (TCNY…YNFK), 513–595 (KKIA…TGVL), 604–665 (TCMA…LRES), 709–779 (VRCL…KEIQ), 788–833 (GISI…LKPI), 838–928 (LTAN…LNAA), and 942–965 (CFTNDGEALYMMSSSELQRIALST). The segment at 867–888 (HSGSPTKSVRSHGEGDGAGNVS) is disordered. Disordered stretches follow at residues 975-1002 (VEVEPLESEDNETASLVNDGNESDKDGE) and 1144-1166 (HEKTNGESENVTTKTTAHEESQF).

This sequence belongs to the WD repeat L(2)GL family. In terms of assembly, may form multimeric complexes. Interacts with mahj. Interacts with aPKC; the interaction results in phosphorylation of l(2)gl. Interacts with ball. Phosphorylated by aPKC which restricts l(2)gl activity to the oocyte posterior and is required for oocyte polarity formation. As to expression, expressed in the epithelial cells of the digestive tract and in gonads, in the ovary's nurse and oocyte's follicle cells.

It localises to the cell membrane. It is found in the secreted. The protein localises to the extracellular space. The protein resides in the extracellular matrix. Essential for the development of polarized epithelia, for cell polarity associated with asymmetric cell division of neuroblasts during development, and for oocyte polarity formation. Promotes the formation of actin-rich projections at the oocyte cortex and the posterior enrichment of par-1 which is required for oocyte polarization. Regulates the localization of axis-specifying morphogens such as stau and grk. Could act as a tumor suppressor. The chain is Lethal(2) giant larvae protein (l(2)gl) from Drosophila pseudoobscura pseudoobscura (Fruit fly).